The chain runs to 443 residues: Chromosomal replication initiator protein DnaA (443 aa).

The domain I, interacts with DnaA modulators stretch occupies residues 1–80; it reads MTSQFASLWQ…LGESVEVRFF (80 aa). Residues 80-104 form a domain II region; sequence FTPSADSRRSEPSRRPVATEESSPP. Residues 83 to 105 are disordered; the sequence is SADSRRSEPSRRPVATEESSPPL. Over residues 85–97 the composition is skewed to basic and acidic residues; the sequence is DSRRSEPSRRPVA. Residues 105 to 321 form a domain III, AAA+ region region; that stretch reads LLNPKYTFDT…GALNRVIAYA (217 aa). 4 residues coordinate ATP: Gly149, Gly151, Lys152, and Thr153. The tract at residues 322-443 is domain IV, binds dsDNA; sequence NLSGKSLTSE…QVLKEKIQRA (122 aa).

Belongs to the DnaA family. As to quaternary structure, oligomerizes as a right-handed, spiral filament on DNA at oriC.

The protein resides in the cytoplasm. Functionally, plays an essential role in the initiation and regulation of chromosomal replication. ATP-DnaA binds to the origin of replication (oriC) to initiate formation of the DNA replication initiation complex once per cell cycle. Binds the DnaA box (a 9 base pair repeat at the origin) and separates the double-stranded (ds)DNA. Forms a right-handed helical filament on oriC DNA; dsDNA binds to the exterior of the filament while single-stranded (ss)DNA is stabiized in the filament's interior. The ATP-DnaA-oriC complex binds and stabilizes one strand of the AT-rich DNA unwinding element (DUE), permitting loading of DNA polymerase. After initiation quickly degrades to an ADP-DnaA complex that is not apt for DNA replication. Binds acidic phospholipids. The sequence is that of Chromosomal replication initiator protein DnaA from Heliobacterium modesticaldum (strain ATCC 51547 / Ice1).